Consider the following 316-residue polypeptide: Olfactory receptor 2AG2 (316 aa).

Residues 1–30 (MELRNSTLGSGFILVGILNDSGSPELLYAT) lie on the Extracellular side of the membrane. Asn5 and Asn19 each carry an N-linked (GlcNAc...) asparagine glycan. Residues 31–51 (FTILYMLALTSNGLLLLAITI) traverse the membrane as a helical segment. Topologically, residues 52 to 56 (EARLH) are cytoplasmic. A helical membrane pass occupies residues 57–77 (MPMYLLLGQLSLMDLLFTSVV). Residues 78 to 97 (TPKALADFLRRENTISFGGC) lie on the Extracellular side of the membrane. An intrachain disulfide couples Cys97 to Cys179. A helical membrane pass occupies residues 98–118 (ALQMFLALTMGSAEDLLLAFM). Over 119–139 (AYDRYVAICHPLKYMTLMSPR) the chain is Cytoplasmic. Residues 140 to 160 (VCWIMVATSWILASLIAIGHT) form a helical membrane-spanning segment. Residues 161 to 205 (MYTMHLPFCVSWEIRHLLCEIPPLLKLACADTSRYELIIYVTGVT) are Extracellular-facing. The helical transmembrane segment at 206–226 (FLLLPISAIVASYTLVLFTVL) threads the bilayer. Residues 227–244 (RMPSNEGRKKALVTCSSH) are Cytoplasmic-facing. The helical transmembrane segment at 245–265 (LIVVGMFYGAATFMYVLPSSF) threads the bilayer. The Extracellular segment spans residues 266-271 (HSPKQD). Residues 272 to 292 (NIISVFYTIVTPALNPLIYSL) form a helical membrane-spanning segment. Residues 293 to 316 (RNKEVMRALRRVLGKYILLAHSTL) lie on the Cytoplasmic side of the membrane.

It belongs to the G-protein coupled receptor 1 family.

It localises to the cell membrane. Odorant receptor. This chain is Olfactory receptor 2AG2 (OR2AG2), found in Homo sapiens (Human).